A 154-amino-acid chain; its full sequence is MSKINFLPTLQDAYEPLMAAQIDILREQVVAEGGDKASVQSRFNYAWGLIKSESVDDQRLGVKILTDIYKESYQRRRECLYYLTVGCYKLKEYSMAKRYVDTLHEAEPNNKQVIALKEMVEDKIQTETIKGLAMVTGAIVGIASIAGYYMRRRK.

Residues 1–130 (MSKINFLPTL…EDKIQTETIK (130 aa)) are Cytoplasmic-facing. A helical transmembrane segment spans residues 131–150 (GLAMVTGAIVGIASIAGYYM). Topologically, residues 151-154 (RRRK) are mitochondrial intermembrane.

It belongs to the FIS1 family.

It localises to the mitochondrion outer membrane. Functionally, has a role in mitochondrial fission. Has a role in outer membrane fission but not matrix separation. The protein is Mitochondrial fission 1 protein (FIS1) of Candida glabrata (strain ATCC 2001 / BCRC 20586 / JCM 3761 / NBRC 0622 / NRRL Y-65 / CBS 138) (Yeast).